The sequence spans 319 residues: tRNA-cytidine(32) 2-sulfurtransferase (319 aa).

Positions 49-54 (SGGKDS) match the PP-loop motif motif. 3 residues coordinate [4Fe-4S] cluster: C124, C127, and C215. The tract at residues 276-319 (DGDTAFDKEEFRDPAPDADDVEDAPKKRTISILDSRGKESGCGA) is disordered. Basic and acidic residues-rich tracts occupy residues 280-290 (AFDKEEFRDPA) and 310-319 (SRGKESGCGA).

Belongs to the TtcA family. Homodimer. Mg(2+) serves as cofactor. The cofactor is [4Fe-4S] cluster.

The protein resides in the cytoplasm. It catalyses the reaction cytidine(32) in tRNA + S-sulfanyl-L-cysteinyl-[cysteine desulfurase] + AH2 + ATP = 2-thiocytidine(32) in tRNA + L-cysteinyl-[cysteine desulfurase] + A + AMP + diphosphate + H(+). The protein operates within tRNA modification. Functionally, catalyzes the ATP-dependent 2-thiolation of cytidine in position 32 of tRNA, to form 2-thiocytidine (s(2)C32). The sulfur atoms are provided by the cysteine/cysteine desulfurase (IscS) system. The chain is tRNA-cytidine(32) 2-sulfurtransferase from Chromobacterium violaceum (strain ATCC 12472 / DSM 30191 / JCM 1249 / CCUG 213 / NBRC 12614 / NCIMB 9131 / NCTC 9757 / MK).